Consider the following 97-residue polypeptide: Serine protease inhibitor Kazal-type 8 (97 aa).

The signal sequence occupies residues 1–21 (MKGICSDAILVLATSMWMAFA). One can recognise a Kazal-like domain in the interval 36–96 (DKTIVECLKN…TKLYDGQCEN (61 aa)). Disulfide bonds link Cys42–Cys76, Cys49–Cys73, and Cys62–Cys94. Asn85 is a glycosylation site (N-linked (GlcNAc...) asparagine).

It localises to the secreted. In terms of biological role, probable serine protease inhibitor. This chain is Serine protease inhibitor Kazal-type 8 (SPINK8), found in Homo sapiens (Human).